A 623-amino-acid chain; its full sequence is V-type proton ATPase catalytic subunit A (623 aa).

252 to 259 provides a ligand contact to ATP; that stretch reads GAFGCGKT.

It belongs to the ATPase alpha/beta chains family. V-ATPase is a heteromultimeric enzyme composed of a peripheral catalytic V1 complex (main components: subunits A, B, C, D, E, and F) attached to an integral membrane V0 proton pore complex (main component: the proteolipid protein).

The catalysed reaction is ATP + H2O + 4 H(+)(in) = ADP + phosphate + 5 H(+)(out). Functionally, catalytic subunit of the peripheral V1 complex of vacuolar ATPase. V-ATPase vacuolar ATPase is responsible for acidifying a variety of intracellular compartments in eukaryotic cells. In Daucus carota (Wild carrot), this protein is V-type proton ATPase catalytic subunit A.